Reading from the N-terminus, the 760-residue chain is Transmembrane channel-like protein 1 (760 aa).

The interval 1–80 (MSPKKVQIKV…RRRRLKRGAE (80 aa)) is disordered. Residues 1-182 (MSPKKVQIKV…KIKAIESQFG (182 aa)) are Cytoplasmic-facing. Acidic residues predominate over residues 13–29 (KEDETEESSSEEEEEVE). Residues 30–39 (DKLPRRESLR) show a composition bias toward basic and acidic residues. S37 is subject to Phosphoserine. T45 bears the Phosphothreonine mark. A compositionally biased stretch (acidic residues) spans 50-61 (NEDDPEPEPEDE). At S128 the chain carries Phosphoserine. The helical transmembrane segment at 183 to 220 (SSVASYFLFLRWMYGVNMVLFILTFSLIMLPEYLWGLP) threads the bilayer. Over 221 to 271 (YGSLPRKTVPRAEEASAANFGVLYDFNGLAQYSVLFYGYYDNKRTIGWMNF) the chain is Extracellular. The chain crosses the membrane as a helical span at residues 272–303 (RLPLSYFLVGIMCIGYSFLVVLKAMTKNIGDD). Topologically, residues 304-359 (GGGDDNTFNFSWKVFTSWDYLIGNPETADNKFNSITMNFKEAITEEKAAQVEENVH) are cytoplasmic. S314 bears the Phosphoserine mark. A helical membrane pass occupies residues 360-390 (LIRFLRFLANFFVFLTLGGSGYLIFWAVKRS). The Extracellular segment spans residues 391 to 402 (QEFAQQDPDTLG). T400 carries the post-translational modification Phosphothreonine. The chain crosses the membrane as a helical span at residues 403–430 (WWEKNEMNMVMSLLGMFCPTLFDLFAEL). At 431 to 434 (EDYH) the chain is on the cytoplasmic side. Residues 435-469 (PLIALKWLLGRIFALLLGNLYVFILALMDEINNKI) form a helical membrane-spanning segment. Residues 470–515 (EEEKLVKANITLWEANMIKAYNASFSENSTGPPFFVHPADVPRGPC) lie on the Extracellular side of the membrane. A helical membrane pass occupies residues 516–553 (WETMVGQEFVRLTVSDVLTTYVTILIGDFLRACFVRFC). The Cytoplasmic portion of the chain corresponds to 554-572 (NYCWCWDLEYGYPSYTEFD). Residues 573–593 (ISGNVLALIFNQGMIWMGSFF) form a helical membrane-spanning segment. The Extracellular segment spans residues 594–596 (APS). The chain crosses the membrane as a helical span at residues 597–619 (LPGINILRLHTSMYFQCWAVMCC). Topologically, residues 620–633 (NVPEARVFKASRSN) are cytoplasmic. Residues 634 to 657 (NFYLGMLLLILFLSTMPVLYMIVS) traverse the membrane as a helical segment. Topologically, residues 658–700 (LPPSFDCGPFSGKNRMFEVIGETLEHDFPSWMAKILRQLSNPG) are extracellular. Residues 701-734 (LVIAVILVMVLAIYYLNATAKGQKAANLDLKKKM) form a helical membrane-spanning segment. Residues 735–760 (KMQALENKMRNKKMAAARAAAAAGRQ) lie on the Cytoplasmic side of the membrane.

The protein belongs to the TMC family. Forms the MET channel complosed of TMC dimer (TMC1 or TMC2), TMIE, TOMT, CIB (CIB2 or CIB3), LHFPL5 and PDH15. The interaction of TMC1 and TMC2 with TOMT is required for the transportation of TMC1/2 into the stereocilia of hair cells. Interacts (via N-terminus) with both isoforms CD1 and CD3 of PCDH15. Can form a heterodimer with TMC2, TMC5 or TMC7. Detected in fetal cochlea, and at low levels in placenta and testis.

The protein localises to the cell membrane. It carries out the reaction Ca(2+)(in) = Ca(2+)(out). Its function is as follows. Pore-forming subunit of the mechanotransducer (MET) non-selective cation channel complex located at the tips of stereocilia of cochlear hair cells and that mediates sensory transduction in the auditory system. The MET complex is composed of two dimeric pore-forming ion-conducting transmembrane TMC (TMC1 or TMC2) subunits, and aided by several auxiliary proteins including LHFPL5, TMIE, CIB2/3 and TOMT, and the tip-link PCDH15. MET channel is activated by tension in the tip-link extending from the side wall of one stereocilium to the tip of the adjacent shorter stereocilium, where the channel is located. TMC1 MET channel is highly permeable to calcium and likely transports monovalent cations. Also involved in vestibular hair cells transduction current. The polypeptide is Transmembrane channel-like protein 1 (Homo sapiens (Human)).